A 141-amino-acid chain; its full sequence is Hemoglobin subunit alpha-D (141 aa).

The Globin domain maps to 1 to 141; sequence MLTADDKKLI…VASVLAEKYR (141 aa). Residues histidine 58 and histidine 87 each contribute to the heme b site.

It belongs to the globin family. As to quaternary structure, heterotetramer of two alpha-D chains and two beta chains. Red blood cells.

Functionally, involved in oxygen transport from the lung to the various peripheral tissues. The polypeptide is Hemoglobin subunit alpha-D (HBAD) (Rhea americana (Greater rhea)).